The chain runs to 287 residues: MSLLIALVPMIAWGSIGLVSGKIGGSANQQTLGMTIGALLFSIVVFFVIQPTLTTATLIVGFISGLFWSLGQNQQFHSMKYMGVSVGLPISTGMQLVVNTVAGAVFFHEWTKTKDFVVGFIALAFLVFGVYLTARQDDDSQPKTSNSMLDFNKGIRALIFSTVGYGVYTIIINATGLDPWGIILPQSIGMLVGASFFAFKKVKVDRFVWMNMTTGLLWGLGNICMLLTMREIGLAISFSLSQMGIIISTLGGIFLLGERKSKKEMFYVIFGCIFVILGGILLGYMKA.

10 helical membrane passes run 5-27 (IALV…GGSA), 32-49 (LGMT…FFVI), 53-71 (LTTA…WSLG), 84-106 (VSVG…GAVF), 116-134 (FVVG…YLTA), 155-177 (IRAL…ATGL), 182-200 (IILP…FAFK), 207-229 (FVWM…LLTM), 234-256 (LAIS…IFLL), and 265-284 (MFYV…LLGY).

It belongs to the GRP transporter (TC 2.A.7.5) family.

Its subcellular location is the cell membrane. In Enterococcus faecalis (strain ATCC 700802 / V583), this protein is Putative sugar uptake protein EF_0928.